Here is a 436-residue protein sequence, read N- to C-terminus: Ribulose bisphosphate carboxylase large chain (436 aa).

Position 4 is an N6,N6,N6-trimethyllysine (Lys-4). Substrate contacts are provided by Asn-113 and Thr-163. The active-site Proton acceptor is the Lys-165. A substrate-binding site is contributed by Lys-167. The Mg(2+) site is built by Lys-191, Asp-193, and Glu-194. Lys-191 is modified (N6-carboxylysine). The Proton acceptor role is filled by His-284. Arg-285, His-317, and Ser-369 together coordinate substrate.

Belongs to the RuBisCO large chain family. Type I subfamily. Heterohexadecamer of 8 large chains and 8 small chains; disulfide-linked. The disulfide link is formed within the large subunit homodimers. It depends on Mg(2+) as a cofactor. The disulfide bond which can form in the large chain dimeric partners within the hexadecamer appears to be associated with oxidative stress and protein turnover.

The protein localises to the plastid. The protein resides in the chloroplast. The enzyme catalyses 2 (2R)-3-phosphoglycerate + 2 H(+) = D-ribulose 1,5-bisphosphate + CO2 + H2O. It catalyses the reaction D-ribulose 1,5-bisphosphate + O2 = 2-phosphoglycolate + (2R)-3-phosphoglycerate + 2 H(+). In terms of biological role, ruBisCO catalyzes two reactions: the carboxylation of D-ribulose 1,5-bisphosphate, the primary event in carbon dioxide fixation, as well as the oxidative fragmentation of the pentose substrate in the photorespiration process. Both reactions occur simultaneously and in competition at the same active site. This is Ribulose bisphosphate carboxylase large chain from Sanguinaria canadensis (Bloodroot).